The following is a 733-amino-acid chain: Phosphoribosylformylglycinamidine synthase subunit PurL (733 aa).

The active site involves His-41. ATP contacts are provided by Tyr-44 and Lys-83. Residue Glu-85 participates in Mg(2+) binding. Residues 86 to 89 and Arg-108 contribute to the substrate site; that span reads SHNH. Catalysis depends on His-87, which acts as the Proton acceptor. Asp-109 lines the Mg(2+) pocket. Residues 212–232 are disordered; sequence GASFASQELSEESEEKRPSVQ. Residue Gln-232 coordinates substrate. Asp-260 lines the Mg(2+) pocket. 304 to 306 lines the substrate pocket; sequence ESQ. The ATP site is built by Asp-488 and Gly-525. Position 526 (Asn-526) interacts with Mg(2+). Ser-528 is a substrate binding site.

It belongs to the FGAMS family. Monomer. Part of the FGAM synthase complex composed of 1 PurL, 1 PurQ and 2 PurS subunits.

It localises to the cytoplasm. The enzyme catalyses N(2)-formyl-N(1)-(5-phospho-beta-D-ribosyl)glycinamide + L-glutamine + ATP + H2O = 2-formamido-N(1)-(5-O-phospho-beta-D-ribosyl)acetamidine + L-glutamate + ADP + phosphate + H(+). It participates in purine metabolism; IMP biosynthesis via de novo pathway; 5-amino-1-(5-phospho-D-ribosyl)imidazole from N(2)-formyl-N(1)-(5-phospho-D-ribosyl)glycinamide: step 1/2. Functionally, part of the phosphoribosylformylglycinamidine synthase complex involved in the purines biosynthetic pathway. Catalyzes the ATP-dependent conversion of formylglycinamide ribonucleotide (FGAR) and glutamine to yield formylglycinamidine ribonucleotide (FGAM) and glutamate. The FGAM synthase complex is composed of three subunits. PurQ produces an ammonia molecule by converting glutamine to glutamate. PurL transfers the ammonia molecule to FGAR to form FGAM in an ATP-dependent manner. PurS interacts with PurQ and PurL and is thought to assist in the transfer of the ammonia molecule from PurQ to PurL. This is Phosphoribosylformylglycinamidine synthase subunit PurL from Thermoanaerobacter pseudethanolicus (strain ATCC 33223 / 39E) (Clostridium thermohydrosulfuricum).